The chain runs to 1127 residues: WD repeat and HMG-box DNA-binding protein 1 (1127 aa).

7 WD repeats span residues 11–50 (GHPE…DPKS), 52–91 (SIGE…GILT), 92–131 (RFTT…QQKT), 134–173 (GHSA…CEAV), 184–223 (FNAK…NICT), 228–267 (FITQ…CLER), and 271–310 (EKGY…DVKQ). 2 disordered regions span residues 811–1013 (AAEQ…AENK) and 1064–1127 (KAKG…FKKE). The span at 819-829 (QNEEEDEEEED) shows a compositional bias: acidic residues. The span at 846 to 857 (GDSRAKPVKQDQ) shows a compositional bias: basic and acidic residues. Positions 858-877 (YEENNEEEMEEEEKEQEEAL) are enriched in acidic residues. Polar residues-rich tracts occupy residues 881–891 (TPTANPFNKSV) and 918–937 (SASQ…TSIL). Low complexity predominate over residues 948–960 (SASGSPSTSKSDS). The segment at residues 1013-1076 (KKPKTGFQLW…GDYPGEDGAD (64 aa)) is a DNA-binding region (HMG box). A compositionally biased stretch (polar residues) spans 1087-1100 (NMASNGCPQENTDS).

As to quaternary structure, homodimer. As to expression, found in oocytes and in various other cells.

The protein resides in the nucleus. It is found in the nucleoplasm. The protein localises to the cytoplasm. Core replisome component that acts as a replication initiation factor. Binds directly to the CMG complex and functions as a hub to recruit additional proteins to the replication fork. The chain is WD repeat and HMG-box DNA-binding protein 1 (wdhd1) from Xenopus laevis (African clawed frog).